Consider the following 277-residue polypeptide: 2-dehydro-3-deoxyphosphooctonate aldolase (277 aa).

It belongs to the KdsA family.

It is found in the cytoplasm. It carries out the reaction D-arabinose 5-phosphate + phosphoenolpyruvate + H2O = 3-deoxy-alpha-D-manno-2-octulosonate-8-phosphate + phosphate. It participates in carbohydrate biosynthesis; 3-deoxy-D-manno-octulosonate biosynthesis; 3-deoxy-D-manno-octulosonate from D-ribulose 5-phosphate: step 2/3. The protein operates within bacterial outer membrane biogenesis; lipopolysaccharide biosynthesis. The polypeptide is 2-dehydro-3-deoxyphosphooctonate aldolase (Brucella canis (strain ATCC 23365 / NCTC 10854 / RM-666)).